A 372-amino-acid chain; its full sequence is Queuine tRNA-ribosyltransferase (372 aa).

Asp-92 serves as the catalytic Proton acceptor. Substrate contacts are provided by residues 92-96, Asp-146, Gln-188, and Gly-215; that span reads DSGGY. Residues 246 to 252 are RNA binding; it reads GIGSLRE. Asp-265 functions as the Nucleophile in the catalytic mechanism. The RNA binding; important for wobble base 34 recognition stretch occupies residues 270–274; the sequence is TRLGR. The Zn(2+) site is built by Cys-303, Cys-305, Cys-308, and His-334.

The protein belongs to the queuine tRNA-ribosyltransferase family. Homodimer. Within each dimer, one monomer is responsible for RNA recognition and catalysis, while the other monomer binds to the replacement base PreQ1. Zn(2+) is required as a cofactor.

The enzyme catalyses 7-aminomethyl-7-carbaguanine + guanosine(34) in tRNA = 7-aminomethyl-7-carbaguanosine(34) in tRNA + guanine. Its pathway is tRNA modification; tRNA-queuosine biosynthesis. Catalyzes the base-exchange of a guanine (G) residue with the queuine precursor 7-aminomethyl-7-deazaguanine (PreQ1) at position 34 (anticodon wobble position) in tRNAs with GU(N) anticodons (tRNA-Asp, -Asn, -His and -Tyr). Catalysis occurs through a double-displacement mechanism. The nucleophile active site attacks the C1' of nucleotide 34 to detach the guanine base from the RNA, forming a covalent enzyme-RNA intermediate. The proton acceptor active site deprotonates the incoming PreQ1, allowing a nucleophilic attack on the C1' of the ribose to form the product. After dissociation, two additional enzymatic reactions on the tRNA convert PreQ1 to queuine (Q), resulting in the hypermodified nucleoside queuosine (7-(((4,5-cis-dihydroxy-2-cyclopenten-1-yl)amino)methyl)-7-deazaguanosine). The polypeptide is Queuine tRNA-ribosyltransferase (Prochlorococcus marinus (strain MIT 9312)).